Reading from the N-terminus, the 251-residue chain is Acidic leucine-rich nuclear phosphoprotein 32 family member B (251 aa).

LRR repeat units lie at residues 16–40 (PAAV…LTAE), 43–64 (NLEF…PKLP), and 65–84 (KLKK…DMLA). Lysine 86 carries the N6-acetyllysine modification. The stretch at 89–110 (NLTHLNLSGNKLKDISTLEPLK) is one LRR 4 repeat. The LRRCT domain occupies 123–161 (CEVTNLNDYRESVFKLLPQLTYLDGYDREDQEAPDSDAE). Residues 149-233 (DREDQEAPDS…DEDEDEEEEE (85 aa)) are compositionally biased toward acidic residues. The tract at residues 149–251 (DREDQEAPDS…RETDDEGEDD (103 aa)) is disordered. Phosphoserine is present on serine 158. Over residues 234 to 244 (GGKGEKRKRET) the composition is skewed to basic and acidic residues. A Nuclear localization signal motif is present at residues 239-242 (KRKR). Phosphothreonine is present on threonine 244.

Belongs to the ANP32 family. Interacts with histones H3 and H4. Interacts with KLF5; this interaction induces promoter region-specific histone incorporation and inhibition of histone acetylation by ANP32B. In terms of assembly, (Microbial infection) Interacts with Sendai virus protein M. As to quaternary structure, (Microbial infection) Interacts with Measles virus protein M. (Microbial infection) Interacts with Hendra virus protein M; this interaction promotes nuclear localization of M. In terms of assembly, (Microbial infection) Interacts with influenza virus B protein PB2; this interaction strongly supports influenza B virus replication. Post-translationally, some glutamate residues are glycylated by TTLL8. This modification occurs exclusively on glutamate residues and results in a glycine chain on the gamma-carboxyl group. Directly cleaved by caspase-3/CASP3. As to expression, expressed in heart, lung, pancreas, prostate and in spleen, thymus and placenta.

The protein resides in the nucleus. The protein localises to the cytoplasm. In terms of biological role, multifunctional protein that is involved in the regulation of many processes including cell proliferation, apoptosis, cell cycle progression or transcription. Regulates the proliferation of neuronal stem cells, differentiation of leukemic cells and progression from G1 to S phase of the cell cycle. As negative regulator of caspase-3-dependent apoptosis, may act as an antagonist of ANP32A in regulating tissue homeostasis. Exhibits histone chaperone properties, able to recruit histones to certain promoters, thus regulating the transcription of specific genes. Also plays an essential role in the nucleocytoplasmic transport of specific mRNAs via the uncommon nuclear mRNA export receptor XPO1/CRM1. Participates in the regulation of adequate adaptive immune responses by acting on mRNA expression and cell proliferation. (Microbial infection) Plays an essential role in influenza A and B viral genome replication. Also plays a role in foamy virus mRNA export from the nucleus to the cytoplasm. This Homo sapiens (Human) protein is Acidic leucine-rich nuclear phosphoprotein 32 family member B (ANP32B).